A 451-amino-acid chain; its full sequence is MDEDREKHVRAKGSDEVDWISKLPDCLLCEVLLNLPTKDVVKTSVLSRRWRNLWKHVPGLDLDNTDFQEFNTFLSFVDSFLDFNSESFLQKFILKYDCDDEYDPDIFLIGRWINTIVTRKVQHIDVLDDSYGSWEVQLPSSIYTCESLVSLKLCGLTLASPEFVSLPSLKVMDLIITKFADDMGLETLITKCPVLESLTIERSFCDEIEVLRVRSQSLLRFTHVADSDEGVVEDLVVSIDAPKLEYLRLSDHRVASFILNKPGKLVKADIDIVFNLSSVNKFNPDDLPKRTMIRNFLLGISTIKDMIIFSSTLEVIYDFSRCERLPLFRNLSVLCVEFYGYMWEMLPIFLESCPNLKTLVVKSASYQEKGENIILPGPRRFLSSLEYVKIERPLKGEAMEMKLVSYLLENSTILKKLTLCLDDSVKKEDSVILKELLAIPRLSTSSKVVVL.

The 54-residue stretch at 17–70 (VDWISKLPDCLLCEVLLNLPTKDVVKTSVLSRRWRNLWKHVPGLDLDNTDFQEF) folds into the F-box domain. LRR repeat units lie at residues 128 to 155 (DDSY…KLCG), 177 to 202 (TKFA…TIER), 224 to 251 (VADS…RLSD), and 335 to 363 (CVEF…VVKS). The region spanning 370–421 (GENIILPGPRRFLSSLEYVKIERPLKGEAMEMKLVSYLLENSTILKKLTLCL) is the FBD domain.

The protein is F-box/LRR-repeat protein 13 (FBL13) of Arabidopsis thaliana (Mouse-ear cress).